The chain runs to 217 residues: Uracil-DNA glycosylase (217 aa).

The active-site Proton acceptor is aspartate 62.

Belongs to the uracil-DNA glycosylase (UDG) superfamily. UNG family.

Its subcellular location is the cytoplasm. The catalysed reaction is Hydrolyzes single-stranded DNA or mismatched double-stranded DNA and polynucleotides, releasing free uracil.. Excises uracil residues from the DNA which can arise as a result of misincorporation of dUMP residues by DNA polymerase or due to deamination of cytosine. This is Uracil-DNA glycosylase from Streptococcus pyogenes serotype M28 (strain MGAS6180).